A 491-amino-acid chain; its full sequence is Lysine--tRNA ligase (491 aa).

Residues E400 and E407 each coordinate Mg(2+).

It belongs to the class-II aminoacyl-tRNA synthetase family. As to quaternary structure, homodimer. It depends on Mg(2+) as a cofactor.

It is found in the cytoplasm. The enzyme catalyses tRNA(Lys) + L-lysine + ATP = L-lysyl-tRNA(Lys) + AMP + diphosphate. This Mesomycoplasma hyopneumoniae (strain J / ATCC 25934 / NCTC 10110) (Mycoplasma hyopneumoniae) protein is Lysine--tRNA ligase.